A 259-amino-acid chain; its full sequence is Ribosomal RNA small subunit methyltransferase J (259 aa).

S-adenosyl-L-methionine contacts are provided by residues 101–102 (RD), 117–118 (ER), 153–154 (SS), and D176.

The protein belongs to the methyltransferase superfamily. RsmJ family.

Its subcellular location is the cytoplasm. It carries out the reaction guanosine(1516) in 16S rRNA + S-adenosyl-L-methionine = N(2)-methylguanosine(1516) in 16S rRNA + S-adenosyl-L-homocysteine + H(+). Specifically methylates the guanosine in position 1516 of 16S rRNA. This is Ribosomal RNA small subunit methyltransferase J from Aliivibrio fischeri (strain MJ11) (Vibrio fischeri).